We begin with the raw amino-acid sequence, 347 residues long: Merozoite surface protein 2 (347 aa).

The signal sequence occupies residues 1 to 20 (MKVIKTLSIINFFIFVTFNI). Residues asparagine 22 and asparagine 36 are each glycosylated (N-linked (GlcNAc...) asparagine). Residues 44–273 (AESKPPTGDG…EQTESPELQS (230 aa)) form a polymorphic region region. Repeat copies occupy residues 53-60 (GAVASAGN), 61-68 (GAVASAGN), 69-76 (GAVASAGN), 77-84 (GAVASAGN), 85-88 (GAGN), 89-92 (GAGN), 93-96 (GAGN), 97-100 (GAGN), 101-104 (GAGN), 105-108 (GAGN), 109-112 (GAGN), 113-116 (GAGN), 117-120 (GAGN), 121-124 (GAGN), 125-128 (GAGN), 129-132 (GAGN), 133-136 (GAGN), 137-140 (GAGN), 141-144 (GAGN), 145-152 (GAVASAGN), 153-156 (GAGN), and 157-164 (GAVASAGN). The segment at 53-164 (GAVASAGNGA…GNGAVASAGN (112 aa)) is 6 X 8 AA repeats of G-A-V-A-S-A-G-N. The interval 85-156 (GAGNGAGNGA…VASAGNGAGN (72 aa)) is 16 X 4 AA repeats of G-A-G-N. Residues 165 to 206 (GAVAERSSSTPATTTTTTTTNDAEASTSTSSENSNHNNAETN) show a composition bias toward low complexity. The segment at 165 to 308 (GAVAERSSST…DSQKECTDGN (144 aa)) is disordered. Polar residues-rich tracts occupy residues 213-240 (VQPN…NVPR) and 247-275 (KSPT…QSAP). A glycan (N-linked (GlcNAc...) asparagine) is linked at asparagine 224. Residue asparagine 296 is glycosylated (N-linked (GlcNAc...) asparagine). The cysteines at positions 304 and 312 are disulfide-linked. Asparagine 320 and asparagine 321 each carry an N-linked (GlcNAc...) asparagine glycan. Asparagine 321 carries the GPI-anchor amidated asparagine lipid modification. A propeptide spans 322 to 347 (SSNIASINKFVVLISATLVLSFAIFI) (removed in mature form).

It localises to the cell membrane. Functionally, may play a role in the merozoite attachment to the erythrocyte. The chain is Merozoite surface protein 2 from Plasmodium falciparum (isolate Nig32 / Nigeria).